An 84-amino-acid polypeptide reads, in one-letter code: Cell division topological specificity factor (84 aa).

Belongs to the MinE family.

Prevents the cell division inhibition by proteins MinC and MinD at internal division sites while permitting inhibition at polar sites. This ensures cell division at the proper site by restricting the formation of a division septum at the midpoint of the long axis of the cell. The polypeptide is Cell division topological specificity factor (Burkholderia ambifaria (strain MC40-6)).